The chain runs to 124 residues: Large ribosomal subunit protein bL12 (124 aa).

Belongs to the bacterial ribosomal protein bL12 family. Homodimer. Part of the ribosomal stalk of the 50S ribosomal subunit. Forms a multimeric L10(L12)X complex, where L10 forms an elongated spine to which 2 to 4 L12 dimers bind in a sequential fashion. Binds GTP-bound translation factors.

Functionally, forms part of the ribosomal stalk which helps the ribosome interact with GTP-bound translation factors. Is thus essential for accurate translation. In Sulfurovum sp. (strain NBC37-1), this protein is Large ribosomal subunit protein bL12.